We begin with the raw amino-acid sequence, 133 residues long: Hexon-interlacing protein (133 aa).

A coiled-coil region spans residues 97 to 127 (REEDALSVVLTRMEELSQQLQDLFAKVALLN).

Belongs to the adenoviridae hexon-interlacing protein family. Homotrimer. Interacts with hexon protein; this interaction tethers the hexons together. Self-interacts with adjacent proteins. Interacts with kinesin light chain KLC1; this interaction leads to capsid disruption at the nuclear pore complex during virus entry into host cell.

The protein localises to the virion. It localises to the host nucleus. Its function is as follows. Structural component of the virion that acts as a cement protein on the capsid exterior and forms triskelion structures consisting of three molecules that stabilize three hexon trimers at the center of each icosahedral facet and fixes the peripentonal hexons. Dispensable for assembly. During virus entry, recruits the anterograde motor kinesin-1 to the capsid docked at the nuclear pore complex thereby subjecting the docked capsid to a pulling force. The resulting tension leads to capsid disruption, dispersion of capsid fragments toward cell periphery and eventually viral DNA entry into the host nucleus. The sequence is that of Hexon-interlacing protein from Homo sapiens (Human).